The sequence spans 129 residues: UPF0102 protein Cag_1992 (129 aa).

Belongs to the UPF0102 family.

The chain is UPF0102 protein Cag_1992 from Chlorobium chlorochromatii (strain CaD3).